The primary structure comprises 221 residues: Large ribosomal subunit protein uL3 (221 aa).

Belongs to the universal ribosomal protein uL3 family. As to quaternary structure, part of the 50S ribosomal subunit. Forms a cluster with proteins L14 and L19.

One of the primary rRNA binding proteins, it binds directly near the 3'-end of the 23S rRNA, where it nucleates assembly of the 50S subunit. The protein is Large ribosomal subunit protein uL3 of Nocardia farcinica (strain IFM 10152).